Here is a 370-residue protein sequence, read N- to C-terminus: Cytochrome b (370 aa).

The next 4 membrane-spanning stretches (helical) occupy residues 25–45, 69–90, 105–125, and 170–190; these read FGSM…FLAV, WLMQ…YIHI, WLSG…GYVL, and FFAL…LHIL. Heme b contacts are provided by H75 and H89. Positions 174 and 188 each coordinate heme b. H193 is a binding site for a ubiquinone. The next 4 helical transmembrane spans lie at 218 to 238, 280 to 300, 312 to 332, and 339 to 358; these read YKDL…VSFF, LGGA…PFTH, LMQL…WSST, and FTTI…ISKP.

Belongs to the cytochrome b family. The cytochrome bc1 complex contains 3 respiratory subunits (MT-CYB, CYC1 and UQCRFS1), 2 core proteins (UQCRC1 and UQCRC2) and probably 6 low-molecular weight proteins. Heme b is required as a cofactor.

Its subcellular location is the mitochondrion inner membrane. Component of the ubiquinol-cytochrome c reductase complex (complex III or cytochrome b-c1 complex) that is part of the mitochondrial respiratory chain. The b-c1 complex mediates electron transfer from ubiquinol to cytochrome c. Contributes to the generation of a proton gradient across the mitochondrial membrane that is then used for ATP synthesis. The protein is Cytochrome b (MT-CYB) of Chilabothrus subflavus (Jamaican yellow boa).